A 580-amino-acid polypeptide reads, in one-letter code: DNA ligase 1 (580 aa).

E245 provides a ligand contact to ATP. K247 (N6-AMP-lysine intermediate) is an active-site residue. ATP-binding residues include R252, R267, E297, F343, R420, and K426.

This sequence belongs to the ATP-dependent DNA ligase family. Mg(2+) is required as a cofactor.

The enzyme catalyses ATP + (deoxyribonucleotide)n-3'-hydroxyl + 5'-phospho-(deoxyribonucleotide)m = (deoxyribonucleotide)n+m + AMP + diphosphate.. DNA ligase that seals nicks in double-stranded DNA during DNA replication, DNA recombination and DNA repair. The protein is DNA ligase 1 of Methanosarcina acetivorans (strain ATCC 35395 / DSM 2834 / JCM 12185 / C2A).